The sequence spans 962 residues: Glycine dehydrogenase (decarboxylating) (962 aa).

Lysine 709 carries the N6-(pyridoxal phosphate)lysine modification.

This sequence belongs to the GcvP family. The glycine cleavage system is composed of four proteins: P, T, L and H. Requires pyridoxal 5'-phosphate as cofactor.

It catalyses the reaction N(6)-[(R)-lipoyl]-L-lysyl-[glycine-cleavage complex H protein] + glycine + H(+) = N(6)-[(R)-S(8)-aminomethyldihydrolipoyl]-L-lysyl-[glycine-cleavage complex H protein] + CO2. The glycine cleavage system catalyzes the degradation of glycine. The P protein binds the alpha-amino group of glycine through its pyridoxal phosphate cofactor; CO(2) is released and the remaining methylamine moiety is then transferred to the lipoamide cofactor of the H protein. This is Glycine dehydrogenase (decarboxylating) from Shewanella sp. (strain MR-7).